We begin with the raw amino-acid sequence, 1107 residues long: MKRFVYINDDEASKELCCDNRISNRKYTLWNFLPKNLWEQFSRFMNQYFLLIACLQLWSLITPVNPASTWGPLIFIFAVSASKEAWDDYHRYLSDKKANEKEVWIVKQGIKKHIQAQDIQVGNIVWLRENDEVPCDLVLLGTSDPQGVCYVETAALDGETDLKTRVIPSACVGIDLELLHKMKGVIECPVPDKDIRRFDANMRLFPPFIDNDVCSLTIKNTLLQSCYLRNTEWACGVSVYTGNQTKLGMSRGIAEPKLTAMDAMIDKLTGAIFVFQIVVVLVLGIAGNVWKDTEARKQWYVQYPEEAPWYELLVIPLRFELLCSIMIPISIKVSLDLVKGLYAKFIEWDVEMIDQETGTASYAANTAISEDLGQVEYILTDKTGTLTDNKMIFRRCCIGGIFYGNENGDALKDAQLLNAITSGSTDVIRFLTVMAICNTVLPVQSKAGDIVYKAQSQDEDALVIAASKLHMVFVGKNANLLEIRFNGSVIRYEVLEILEFTSDRKRMSVVVKDCQNGKIILLSKGADEAILPYARAGQQTRTIGDAVEHYSQLGLRTLCLAWRELEENEYLEWSVKFKEASSLLVDREWRIAEVCQRLEHDLYILGVTAIEDRLQDGVPETIETLRKAGINFWMLTGDKQNTAIQIALSCNFISPEPKGQLLMIDGKTEEDVSRSLERVLLTMRITASEPKDVAFVIDGWALEIALKHHRKDFVELAILSRTAICCRVTPSQKAQLVEILKSCDYRTLAIGDGGNDVRMIQQADIGVGISGREGLQAARAADYSIGRFRFLKRLILVHGRYSYNRTAFLSQYSFYKSLLICFIQIFFSFISGVSGTSLFNSVSLMAYNVFYTSVPVLVSVIDKDLSEASVMQHPQILFYCQAGRLLNPSTFAGWFGRSLFHAIIVFVITIHAYAYEKSEMEELGMVALSGCIWLQAFVVAQETNSFTVLQHLSIWGNLVGFYAINFLFSAIPSSGMYTIMFRLCSQPSYWITMFLIVGAGMGPIFALKYFRYTYRPSKINILQQAERMGGPILTLGNIETQPRTIEKDLSPISITQPKNRSPVYEPLLSDSPNATRRSFGPGTPFEFFQSQSRLSSSSGYTRNCKDN.

Topologically, residues 1-33 (MKRFVYINDDEASKELCCDNRISNRKYTLWNFL) are cytoplasmic. Residues 34 to 55 (PKNLWEQFSRFMNQYFLLIACL) form a helical membrane-spanning segment. Residues 56–60 (QLWSL) are Extracellular-facing. The helical transmembrane segment at 61–83 (ITPVNPASTWGPLIFIFAVSASK) threads the bilayer. Over 84–268 (EAWDDYHRYL…TAMDAMIDKL (185 aa)) the chain is Cytoplasmic. Residues 269–290 (TGAIFVFQIVVVLVLGIAGNVW) form a helical membrane-spanning segment. Residues 291–315 (KDTEARKQWYVQYPEEAPWYELLVI) are Extracellular-facing. The helical transmembrane segment at 316–333 (PLRFELLCSIMIPISIKV) threads the bilayer. The Cytoplasmic segment spans residues 334–807 (SLDLVKGLYA…HGRYSYNRTA (474 aa)). Asp381 functions as the 4-aspartylphosphate intermediate in the catalytic mechanism. Residues Asp752 and Asp756 each coordinate Mg(2+). Residues 808–827 (FLSQYSFYKSLLICFIQIFF) form a helical membrane-spanning segment. Topologically, residues 828-841 (SFISGVSGTSLFNS) are extracellular. Residues 842 to 860 (VSLMAYNVFYTSVPVLVSV) traverse the membrane as a helical segment. Topologically, residues 861–890 (IDKDLSEASVMQHPQILFYCQAGRLLNPST) are cytoplasmic. Residues 891 to 912 (FAGWFGRSLFHAIIVFVITIHA) form a helical membrane-spanning segment. The Extracellular segment spans residues 913–919 (YAYEKSE). A helical transmembrane segment spans residues 920–942 (MEELGMVALSGCIWLQAFVVAQE). The Cytoplasmic segment spans residues 943–948 (TNSFTV). Residues 949–969 (LQHLSIWGNLVGFYAINFLFS) traverse the membrane as a helical segment. Residues 970–982 (AIPSSGMYTIMFR) are Extracellular-facing. A helical transmembrane segment spans residues 983-1007 (LCSQPSYWITMFLIVGAGMGPIFAL). Topologically, residues 1008–1107 (KYFRYTYRPS…SGYTRNCKDN (100 aa)) are cytoplasmic. The interval 1048–1075 (DLSPISITQPKNRSPVYEPLLSDSPNAT) is disordered. Ser1050 bears the Phosphoserine mark.

This sequence belongs to the cation transport ATPase (P-type) (TC 3.A.3) family. Type IV subfamily. Interacts with ALIS1, ALIS3 and ALIS5 in a heterologous system.

It localises to the endoplasmic reticulum membrane. It is found in the prevacuolar compartment membrane. The catalysed reaction is ATP + H2O + phospholipidSide 1 = ADP + phosphate + phospholipidSide 2.. Involved in transport of phospholipids. Contributes to transmembrane flipping of lipids. Requires an interaction with a protein of the ALIS family for activity. Specific for phosphatidylserine and has no activity with lysolipid, phosphatidylcholine or phosphatidylethanolamine. In Arabidopsis thaliana (Mouse-ear cress), this protein is Phospholipid-transporting ATPase 2.